A 184-amino-acid polypeptide reads, in one-letter code: Ribosome-recycling factor (184 aa).

The protein belongs to the RRF family.

It localises to the cytoplasm. Its function is as follows. Responsible for the release of ribosomes from messenger RNA at the termination of protein biosynthesis. May increase the efficiency of translation by recycling ribosomes from one round of translation to another. This is Ribosome-recycling factor from Caldicellulosiruptor saccharolyticus (strain ATCC 43494 / DSM 8903 / Tp8T 6331).